The following is an 805-amino-acid chain: Phenylalanine--tRNA ligase beta subunit (805 aa).

The region spanning 39 to 148 is the tRNA-binding domain; the sequence is APPFTGVVVT…AALRPGTDIR (110 aa). Positions 399-474 constitute a B5 domain; the sequence is PVREPVRMRL…RVYGFERIPD (76 aa). The Mg(2+) site is built by Asp-452, Asp-458, Glu-461, and Glu-462. The FDX-ACB domain occupies 703–804; sequence SRQPVVVRDL…LVAAHNARQR (102 aa).

Belongs to the phenylalanyl-tRNA synthetase beta subunit family. Type 1 subfamily. Tetramer of two alpha and two beta subunits. It depends on Mg(2+) as a cofactor.

It is found in the cytoplasm. The catalysed reaction is tRNA(Phe) + L-phenylalanine + ATP = L-phenylalanyl-tRNA(Phe) + AMP + diphosphate + H(+). The protein is Phenylalanine--tRNA ligase beta subunit of Bordetella pertussis (strain Tohama I / ATCC BAA-589 / NCTC 13251).